A 410-amino-acid polypeptide reads, in one-letter code: Arginine deiminase (410 aa).

Cys399 serves as the catalytic Amidino-cysteine intermediate.

The protein belongs to the arginine deiminase family.

It localises to the cytoplasm. It catalyses the reaction L-arginine + H2O = L-citrulline + NH4(+). Its pathway is amino-acid degradation; L-arginine degradation via ADI pathway; carbamoyl phosphate from L-arginine: step 1/2. This chain is Arginine deiminase, found in Listeria monocytogenes serotype 4b (strain F2365).